A 442-amino-acid polypeptide reads, in one-letter code: 3-dehydroquinate synthase, chloroplastic (442 aa).

The N-terminal 58 residues, 1–58 (MAANTISLSNVAASKNLNSFQSRAFIAPPTIFFPVASAKSKPGELSLSSTTLSRSRVR), are a transit peptide targeting the chloroplast. An N-acetylalanine modification is found at A59. NAD(+) is bound by residues N119, 150 to 152 (DGE), K155, 183 to 188 (GGVIGD), 208 to 209 (TT), K221, K230, and 248 to 251 (TLNT). E263 is an a divalent metal cation binding site. An NAD(+)-binding site is contributed by K305. A divalent metal cation contacts are provided by H326 and H343.

Belongs to the sugar phosphate cyclases superfamily. Dehydroquinate synthase family. Homodimer. Requires a divalent metal cation as cofactor. NAD(+) is required as a cofactor.

The protein resides in the plastid. Its subcellular location is the chloroplast. The catalysed reaction is 7-phospho-2-dehydro-3-deoxy-D-arabino-heptonate = 3-dehydroquinate + phosphate. It functions in the pathway metabolic intermediate biosynthesis; chorismate biosynthesis; chorismate from D-erythrose 4-phosphate and phosphoenolpyruvate: step 2/7. Functionally, catalyzes the second step in the shikimate pathway. This Arabidopsis thaliana (Mouse-ear cress) protein is 3-dehydroquinate synthase, chloroplastic (DHQS).